The chain runs to 379 residues: MNNTEYYERLGVDKNASQDEIKKAYRKMSKKYHPDLNKEEGAEDKYKEVQEAYETLSDEQKRAAYDQYGEAGANGGFGGGGFGGASGFSGFGGASGGFGGFEDIFSSFFGGGGAQVNPNAPRQGDDLQYRINLKFEEAIFGVEKQVKYNREELCHTCGGSGAKAGTHPETCHKCGGRGQINVVRDTPLGRMQTQTTCDVCHGTGKEIKEKCTTCHGSGHEKVAHTVKVTVPAGVETGQKMRLQGQGDAGVNGGPYGDLYVVFQVEASDKFERDGAEIYYKMPMDFVQAALGDEVEVPTVHGNVKLKIPAGTQTGANFRLKGKGAPKLRGSGNGDQYVIINIVTPKNMNQAQKEALQAFAKASGIEVSGSGKKGFFDKFK.

The 65-residue stretch at 5-69 folds into the J domain; the sequence is EYYERLGVDK…QKRAAYDQYG (65 aa). The CR-type zinc finger occupies 141-223; it reads GVEKQVKYNR…CHGSGHEKVA (83 aa). Zn(2+) contacts are provided by cysteine 154, cysteine 157, cysteine 171, cysteine 174, cysteine 197, cysteine 200, cysteine 211, and cysteine 214. CXXCXGXG motif repeat units follow at residues 154–161, 171–178, 197–204, and 211–218; these read CHTCGGSG, CHKCGGRG, CDVCHGTG, and CTTCHGSG.

The protein belongs to the DnaJ family. As to quaternary structure, homodimer. It depends on Zn(2+) as a cofactor.

It localises to the cytoplasm. Its function is as follows. Participates actively in the response to hyperosmotic and heat shock by preventing the aggregation of stress-denatured proteins and by disaggregating proteins, also in an autonomous, DnaK-independent fashion. Unfolded proteins bind initially to DnaJ; upon interaction with the DnaJ-bound protein, DnaK hydrolyzes its bound ATP, resulting in the formation of a stable complex. GrpE releases ADP from DnaK; ATP binding to DnaK triggers the release of the substrate protein, thus completing the reaction cycle. Several rounds of ATP-dependent interactions between DnaJ, DnaK and GrpE are required for fully efficient folding. Also involved, together with DnaK and GrpE, in the DNA replication of plasmids through activation of initiation proteins. The protein is Chaperone protein DnaJ of Lactococcus lactis subsp. cremoris (strain MG1363).